A 368-amino-acid polypeptide reads, in one-letter code: Ubl carboxyl-terminal hydrolase 18 (368 aa).

A mediates interaction with IFNAR2 region spans residues 31 to 48 (MKRKRVLSRDLCSAWDSP). The tract at residues 48–109 (PHGLVGLHNI…LLLLLEKMQD (62 aa)) is mediates interaction with STAT2. Residues 52 to 366 (VGLHNIGQTC…TAYLLVYTKT (315 aa)) enclose the USP domain. Cys61 acts as the Nucleophile in catalysis. Residues 299–308 (ELFAVIAHVG) are mediates interaction with STAT2 and necessary for the negative regulation of the type I IFN signaling pathway. The interval 309-368 (MADFGHYCAYIRNPVDGKWFCFNDSHVCWVTWKDVQCTYGNHRYRWRETAYLLVYTKTGS) is mediates interaction with IFNAR2. Residue His314 is the Proton acceptor of the active site.

Belongs to the peptidase C19 family. As to quaternary structure, interacts with STAT2; the interaction is direct. Interacts with IFNAR2; indirectly via STAT2, it negatively regulates the assembly of the ternary interferon-IFNAR1-IFNAR2 complex and inhibits type I interferon signaling. Interacts with STING1. Interacts with USP20.

The enzyme catalyses Thiol-dependent hydrolysis of ester, thioester, amide, peptide and isopeptide bonds formed by the C-terminal Gly of ubiquitin (a 76-residue protein attached to proteins as an intracellular targeting signal).. Its function is as follows. Interferon-induced ISG15-specific protease that plays a crucial role for maintaining a proper balance of ISG15-conjugated proteins in cells. Regulates protein ISGylation by efficiently cleaving ISG15 conjugates linked via isopeptide bonds. Regulates T-cell activation and T-helper 17 (Th17) cell differentiation by deubiquitinating TAK1, likely to keep TAK1-TAB complexes in steady conditions. In turn, restricts activation of NF-kappa-B, NFAT, and JNK as well as expression of IL2 in T-cells after TCR activation. Acts as a molecular adapter with USP20 to promote innate antiviral response through deubiquitinating STING1. Involved also in the negative regulation of the inflammatory response triggered by type I interferon. Upon recruitment by STAT2 to the type I interferon receptor subunit IFNAR2 interferes with the assembly of the ternary interferon-IFNAR1-IFNAR2 complex and acts as a negative regulator of the type I interferon signaling pathway. The protein is Ubl carboxyl-terminal hydrolase 18 (Usp18) of Mus musculus (Mouse).